Here is a 1196-residue protein sequence, read N- to C-terminus: MAAPAAGSGPGGSSGGITGGAGGSLGVVGPSTSTSSVNPFLSDSEEEEDGGEEEEEEEEDDNEEDDEDVSPLNERPAASLASRYLQDEADSTLLPSAGPRLCLQPGEPGRVPLDAVAAQLLRDQLLLTALELHTELLESGRELPRLRDYFSNPGNFERATAAPPGFGGNTTASTGGQLNRAGSISTLDSLDFARYSDDGNRETDERVAENEVPLQERKNYKSSPEIQEPIKPLEKRALNFLVNEYLLKNNNKLTSITFSDENDDQDFELWDDVGLNTPKPPDLLQLYRNLSNHQTVSKDVADIAVGVIEGDLEPIQAVKQIAPDSHISQQAAIIKELEDKIILCNNEKAALLEQIGNLERQIESLQKENSASGVCSAAPPTSDRLQSQTSEESDHYIDIQITDSDAKCEGTEERLPFQQSECEPVCQVSEDIPPSPELAKIRKTTLLSAPPSKAGVHFDKPNRKLSPAFHQALLSFCRMSADSRLGSEVSQIADSENGVMKMLGRCLPHIVPNVLLAKREELIPLILCTACLHPESKERDQLLHILFNLIKRPDDEQRQMILTGCVAFARHVGPTRVEAELLPQCWEQINHKYPERRLLVAESCGDLAPYLPKEIRSSLVLAMLQQMLMEDKADMVREAVIKSLGIIMGYIDDPDKYSQGFELLLTALGDPSERVVSATHQVFLPAYAAWTMELGNLQSHLIPTLLSKIEKLLKEGEHGLDEHKLHMYLSALQSLIPSLFATVLQNAPFTSKAKLQGEVPQIEVTRFPRPVSPLQDVATIIGSREQLAVLLQLYDYQLEHEGTTGWESLLWVVNQLLPQLIEIVGRITVTSTASVHEFSRFFWRLCRTFGKIFTNTKVKPQFQEILRLSEENIDSTAGNGVLTKATVPIYATGVLTCYNQEEDRKLLVGFLEDVMTMLSLSHAPLDSLKASFVELGTNPAYHELLLTVLWYGVVHTSALVRCTAARMFELLVKGVNETLVAQRVVPALITLSSDPEISVRIATVPAFGTIMETVTQRELLERVKMQLASFLEDPQYQDQHSLQTEIIRTFGRVGPNAEPRFRDDFVLPHLHKLSFVNNQQSVDSKRLDIATHLFEAYSALSCCFISEELMMNHFLPGLRCLRTDMEQLSPEHEVILSSMIKECEQKVENKTVQEPQGSMSIAASLVSEDTKTKFLNKMGQLTTSGAMLANVFQRKK.

3 disordered regions span residues 1–73 (MAAP…SPLN), 159–180 (ATAA…QLNR), and 195–225 (YSDD…SSPE). Positions 8 to 26 (SGPGGSSGGITGGAGGSLG) are enriched in gly residues. The span at 27 to 37 (VVGPSTSTSSV) shows a compositional bias: low complexity. The span at 43 to 69 (DSEEEEDGGEEEEEEEEDDNEEDDEDV) shows a compositional bias: acidic residues. Over residues 169-180 (NTTASTGGQLNR) the composition is skewed to polar residues. A compositionally biased stretch (basic and acidic residues) spans 195 to 219 (YSDDGNRETDERVAENEVPLQERKN). One can recognise a LisH domain in the interval 234–266 (EKRALNFLVNEYLLKNNNKLTSITFSDENDDQD). Residues 333-374 (IIKELEDKIILCNNEKAALLEQIGNLERQIESLQKENSASGV) adopt a coiled-coil conformation. The interval 370-393 (SASGVCSAAPPTSDRLQSQTSEES) is disordered. HEAT repeat units follow at residues 620–659 (VLAM…KYSQ) and 984–1022 (VVPA…LLER).

The protein localises to the recycling endosome. It localises to the golgi apparatus. Its subcellular location is the trans-Golgi network. Functionally, may regulate intracellular cholesterol transport. This chain is RAB11-binding protein RELCH homolog (relch), found in Xenopus tropicalis (Western clawed frog).